Reading from the N-terminus, the 284-residue chain is RNase adapter protein RapZ (284 aa).

8–15 (GRSGSGKS) is a binding site for ATP. 56–59 (DVRN) contributes to the GTP binding site. The segment at 266–284 (RSRGKNAQSRHRTLEKSKS) is RNA-binding.

Belongs to the RapZ-like family. RapZ subfamily. In terms of assembly, homotrimer.

Functionally, modulates the synthesis of GlmS, by affecting the processing and stability of the regulatory small RNA GlmZ. When glucosamine-6-phosphate (GlcN6P) concentrations are high in the cell, RapZ binds GlmZ and targets it to cleavage by RNase E. Consequently, GlmZ is inactivated and unable to activate GlmS synthesis. Under low GlcN6P concentrations, RapZ is sequestered and inactivated by an other regulatory small RNA, GlmY, preventing GlmZ degradation and leading to synthesis of GlmS. The polypeptide is RNase adapter protein RapZ (Sodalis glossinidius (strain morsitans)).